We begin with the raw amino-acid sequence, 373 residues long: Chaperone protein DnaJ (373 aa).

One can recognise a J domain in the interval 4–68 (DFYEILGVSR…QARANYDRFG (65 aa)). The CR-type zinc-finger motif lies at 132 to 214 (GGEKEIRINH…CGGQGHIQVS (83 aa)). 8 residues coordinate Zn(2+): cysteine 145, cysteine 148, cysteine 162, cysteine 165, cysteine 188, cysteine 191, cysteine 202, and cysteine 205. 4 CXXCXGXG motif repeats span residues 145–152 (CKTCQGTG), 162–169 (CSTCGGVG), 188–195 (CPTCGGSG), and 202–209 (CESCGGQG).

This sequence belongs to the DnaJ family. Homodimer. Zn(2+) is required as a cofactor.

It is found in the cytoplasm. In terms of biological role, participates actively in the response to hyperosmotic and heat shock by preventing the aggregation of stress-denatured proteins and by disaggregating proteins, also in an autonomous, DnaK-independent fashion. Unfolded proteins bind initially to DnaJ; upon interaction with the DnaJ-bound protein, DnaK hydrolyzes its bound ATP, resulting in the formation of a stable complex. GrpE releases ADP from DnaK; ATP binding to DnaK triggers the release of the substrate protein, thus completing the reaction cycle. Several rounds of ATP-dependent interactions between DnaJ, DnaK and GrpE are required for fully efficient folding. Also involved, together with DnaK and GrpE, in the DNA replication of plasmids through activation of initiation proteins. This Thermosynechococcus vestitus (strain NIES-2133 / IAM M-273 / BP-1) protein is Chaperone protein DnaJ.